Here is a 951-residue protein sequence, read N- to C-terminus: Zinc fingers and homeoboxes protein 3 (951 aa).

The disordered stretch occupies residues 1–66 (MASKRKSTTP…SSTDGSALAN (66 aa)). The segment covering 42 to 58 (PSEAPEASSEAAPNPSS) has biased composition (low complexity). 2 C2H2-type zinc fingers span residues 77-100 (YSCKECDFRSQDVTHFVGHMTSEH) and 109-132 (FVCTGCSFLAKTPEGLSLHNAKCH). The interval 198–249 (KENAPTQPGGEALPKPLAGETEGKEGDHTFINGATPVSQASANSTKPPHTAN) is disordered. The segment covering 232–244 (TPVSQASANSTKP) has biased composition (polar residues). The tract at residues 237-481 (ASANSTKPPH…LLTACPSITS (245 aa)) is required for homodimerization and interaction with NFYA. Residues 297–495 (LSSIPTYNAA…DANIYKNKKS (199 aa)) form a required for repressor activity region. DNA-binding regions (homeobox) lie at residues 298–357 (SSIP…GISW) and 487–546 (ANIY…RNLK). The interval 490 to 548 (YKNKKSHEQLSALKGSFCRNQFPGQSEVEHLTKVTGLSTREVRKWFSDRRYHCRNLKGT) is required for nuclear localization. A Phosphoserine modification is found at Ser-597. The segment at residues 605-664 (TPTKYKERAPEQLRVLESSFAQNPLPPEEELDRLRSETKMTRREIDGWFSERRKRVNAEE) is a DNA-binding region (homeobox 3). 2 disordered regions span residues 621 to 642 (ESSFAQNPLPPEEELDRLRSET) and 661 to 702 (NAEE…NGSS). Residues 661 to 674 (NAEETKKADGHAPQ) are compositionally biased toward basic and acidic residues. Residues 675–690 (EEAEGAEEEGRDEELA) show a composition bias toward acidic residues. Phosphoserine occurs at positions 701 and 716. 2 consecutive DNA-binding regions (homeobox) follow at residues 759–818 (PSRV…KNGQ) and 830–889 (FPPG…TRAV). The interval 885-951 (ETRAVADTSS…PQSGRQLETD (67 aa)) is disordered. Phosphoserine occurs at positions 922 and 941. The segment covering 937–951 (FDTSSPQSGRQLETD) has biased composition (polar residues).

This sequence belongs to the ZHX family. In terms of assembly, homodimer (via homeobox domain 1). Heterodimer with ZHX1 (via homeobox domain 1). Heterodimer with ZHX2 (via homeobox domain 1). Heterodimerization with ZHX1 is a prerequisite for repressor activity. Interacts with NFYA. In terms of tissue distribution, widely expressed.

The protein localises to the cytoplasm. It is found in the nucleus. In terms of biological role, acts as a transcriptional repressor. Involved in the early stages of mesenchymal stem cell (MSC) osteogenic differentiation. Is a regulator of podocyte gene expression during primary glomerula disease. Binds to promoter DNA. The protein is Zinc fingers and homeoboxes protein 3 (Zhx3) of Rattus norvegicus (Rat).